A 447-amino-acid polypeptide reads, in one-letter code: MDRMFGTDGVRGIANTELTAQIAYNLGRAGAYVLTEGAHKPKILVAKDTRISGDMLESALVAGILSVGAEAVILGVVPTPAVAYLTREYNADAGVMISASHNPVEYNGIKFFNNKGYKLSDELEDGIQKVIESDFEGVPSPIGIDLGRERIEVAALEDYTEFAKQTIPYNLKGMKIALDCANGASYKSAVKAFRDLGADVFVINDNPDGTNINKNCGSTHPEELMDYVVKKGCDLGFAFDGDADRCLAVDENGKLINGDFILMLCANYLKEIGKLKDDTLVVTVMSNLGLDIACRGFGIKLEKTKVGDRYVLEEMTKDNYVLGGEQSGHVIFLDYNTTGDGLVTALQVASIVKKKEKTLSELCSVMKELPQVLVNATVPNDKKNIYLEDTEIVEAIKEIEAKLNGVGRVLIRPSGTEPLVRVMLEGENQAEIDEMAHGLANLILSKI.

Serine 100 serves as the catalytic Phosphoserine intermediate. Serine 100, aspartate 240, aspartate 242, and aspartate 244 together coordinate Mg(2+). Serine 100 carries the post-translational modification Phosphoserine.

The protein belongs to the phosphohexose mutase family. Mg(2+) is required as a cofactor. Activated by phosphorylation.

It carries out the reaction alpha-D-glucosamine 1-phosphate = D-glucosamine 6-phosphate. Catalyzes the conversion of glucosamine-6-phosphate to glucosamine-1-phosphate. This Clostridium botulinum (strain Eklund 17B / Type B) protein is Phosphoglucosamine mutase.